Reading from the N-terminus, the 115-residue chain is Protein translation factor SUI1 homolog (115 aa).

This sequence belongs to the SUI1 family.

Its function is as follows. Probably involved in translation. The polypeptide is Protein translation factor SUI1 homolog (Sporobolus stapfianus (Ressurection grass)).